The following is a 396-amino-acid chain: MQNMVILGATGSIGASTLSVISANPDAYRVYALVANASVDKMLALCITHRPQVAHMVDSQAALALQAKLPPELNIQVSSGEDELIALVTATEVDTVMAAIVGAAGLVPTLAAVKAGKRVLLANKEALVMSGELFIEATKASGATLLPVDSEHNAIFQCLPEEVQANLGRCDLAASGISHILLTGSGGPFLTAELASLAAMTPAQACKHPNWSMGPKISVDSATMMNKGLEFIEARWLFNTQNDQLKVVIHPQSVIHSMVQYRDGSVIAQMGNPDMRTPIAHCMSYPQRISSGVEPLDFFKVGQLSFCEPDFNRFPCLALAIAACAQGQEATTVLNAANEIAVEAFLQGQIGFTHIAKVNEACLSSVPKRAMTSIDDIIALDAQTRIYAREQLAKLA.

NADPH-binding residues include Thr-10, Gly-11, Ser-12, Ile-13, and Asn-123. Residue Lys-124 participates in 1-deoxy-D-xylulose 5-phosphate binding. Position 125 (Glu-125) interacts with NADPH. Asp-149 contributes to the Mn(2+) binding site. Residues Ser-150, Glu-151, Ser-185, and His-208 each coordinate 1-deoxy-D-xylulose 5-phosphate. Glu-151 is a Mn(2+) binding site. Gly-214 provides a ligand contact to NADPH. 1-deoxy-D-xylulose 5-phosphate-binding residues include Ser-221, Asn-226, Lys-227, and Glu-230. Residue Glu-230 participates in Mn(2+) binding.

This sequence belongs to the DXR family. Mg(2+) is required as a cofactor. Requires Mn(2+) as cofactor.

It carries out the reaction 2-C-methyl-D-erythritol 4-phosphate + NADP(+) = 1-deoxy-D-xylulose 5-phosphate + NADPH + H(+). It functions in the pathway isoprenoid biosynthesis; isopentenyl diphosphate biosynthesis via DXP pathway; isopentenyl diphosphate from 1-deoxy-D-xylulose 5-phosphate: step 1/6. In terms of biological role, catalyzes the NADPH-dependent rearrangement and reduction of 1-deoxy-D-xylulose-5-phosphate (DXP) to 2-C-methyl-D-erythritol 4-phosphate (MEP). This Shewanella sp. (strain MR-4) protein is 1-deoxy-D-xylulose 5-phosphate reductoisomerase.